Here is a 493-residue protein sequence, read N- to C-terminus: Argininosuccinate lyase (493 aa).

The protein belongs to the lyase 1 family. Argininosuccinate lyase subfamily.

Its subcellular location is the cytoplasm. The catalysed reaction is 2-(N(omega)-L-arginino)succinate = fumarate + L-arginine. The protein operates within amino-acid biosynthesis; L-arginine biosynthesis; L-arginine from L-ornithine and carbamoyl phosphate: step 3/3. This chain is Argininosuccinate lyase, found in Clavibacter sepedonicus (Clavibacter michiganensis subsp. sepedonicus).